A 220-amino-acid chain; its full sequence is 2-dehydro-3-deoxy-phosphogluconate aldolase (220 aa).

The active-site Proton acceptor is Glu-48. The pyruvate site is built by Arg-52, Thr-76, and Lys-136. Lys-136 acts as the Schiff-base intermediate with substrate in catalysis.

Belongs to the KHG/KDPG aldolase family. Homotrimer.

The enzyme catalyses 2-dehydro-3-deoxy-6-phospho-D-gluconate = D-glyceraldehyde 3-phosphate + pyruvate. Its pathway is carbohydrate acid metabolism; 2-dehydro-3-deoxy-D-gluconate degradation; D-glyceraldehyde 3-phosphate and pyruvate from 2-dehydro-3-deoxy-D-gluconate: step 2/2. Its function is as follows. Involved in the degradation of glucose via the Entner-Doudoroff pathway. Catalyzes the reversible, stereospecific retro-aldol cleavage of 2-keto-3-deoxy-6-phosphogluconate (KDPG) to pyruvate and D-glyceraldehyde-3-phosphate. The chain is 2-dehydro-3-deoxy-phosphogluconate aldolase (eda) from Pseudomonas aeruginosa (strain ATCC 15692 / DSM 22644 / CIP 104116 / JCM 14847 / LMG 12228 / 1C / PRS 101 / PAO1).